Reading from the N-terminus, the 91-residue chain is Large ribosomal subunit protein uL23 (91 aa).

This sequence belongs to the universal ribosomal protein uL23 family. Part of the 50S ribosomal subunit. Contacts protein L29, and trigger factor when it is bound to the ribosome.

In terms of biological role, one of the early assembly proteins it binds 23S rRNA. One of the proteins that surrounds the polypeptide exit tunnel on the outside of the ribosome. Forms the main docking site for trigger factor binding to the ribosome. The chain is Large ribosomal subunit protein uL23 from Staphylococcus aureus (strain USA300).